We begin with the raw amino-acid sequence, 134 residues long: Small ribosomal subunit protein uS12 (134 aa).

At Asp-89 the chain carries 3-methylthioaspartic acid. The tract at residues 101-134 (TLDASGVNGRNQSRSKYGTKRPKPGQAAAGGKKK) is disordered. Residues 125–134 (GQAAAGGKKK) show a composition bias toward low complexity.

It belongs to the universal ribosomal protein uS12 family. Part of the 30S ribosomal subunit. Contacts proteins S8 and S17. May interact with IF1 in the 30S initiation complex.

Its function is as follows. With S4 and S5 plays an important role in translational accuracy. Functionally, interacts with and stabilizes bases of the 16S rRNA that are involved in tRNA selection in the A site and with the mRNA backbone. Located at the interface of the 30S and 50S subunits, it traverses the body of the 30S subunit contacting proteins on the other side and probably holding the rRNA structure together. The combined cluster of proteins S8, S12 and S17 appears to hold together the shoulder and platform of the 30S subunit. In Gemmatimonas aurantiaca (strain DSM 14586 / JCM 11422 / NBRC 100505 / T-27), this protein is Small ribosomal subunit protein uS12.